The following is a 359-amino-acid chain: Aspartate carbamoyltransferase catalytic subunit (359 aa).

Carbamoyl phosphate-binding residues include Arg52 and Thr53. An L-aspartate-binding site is contributed by Lys81. Residues Arg102, His130, and Gln133 each contribute to the carbamoyl phosphate site. Positions 163 and 224 each coordinate L-aspartate. Positions 264 and 265 each coordinate carbamoyl phosphate.

The protein belongs to the aspartate/ornithine carbamoyltransferase superfamily. ATCase family. In terms of assembly, heterododecamer (2C3:3R2) of six catalytic PyrB chains organized as two trimers (C3), and six regulatory PyrI chains organized as three dimers (R2).

The enzyme catalyses carbamoyl phosphate + L-aspartate = N-carbamoyl-L-aspartate + phosphate + H(+). It participates in pyrimidine metabolism; UMP biosynthesis via de novo pathway; (S)-dihydroorotate from bicarbonate: step 2/3. In terms of biological role, catalyzes the condensation of carbamoyl phosphate and aspartate to form carbamoyl aspartate and inorganic phosphate, the committed step in the de novo pyrimidine nucleotide biosynthesis pathway. The polypeptide is Aspartate carbamoyltransferase catalytic subunit (Brachyspira hyodysenteriae (strain ATCC 49526 / WA1)).